Here is a 175-residue protein sequence, read N- to C-terminus: Chromobox protein homolog hpl-2 (175 aa).

A Chromo domain is found at 19–78 (FMVEKVLDKRTGKAGRDEFLIQWQGFPESDSSWEPRENLQCVEMLDEFEREFSKREKPIR). Residues 71 to 109 (SKREKPIRKRHSQKPEPSEDQADPEEDKDEKKETNQNDK) form a disordered region. Positions 88-98 (SEDQADPEEDK) are enriched in acidic residues. A compositionally biased stretch (basic and acidic residues) spans 99–109 (DEKKETNQNDK). One can recognise a Chromo 2; shadow subtype domain in the interval 115 to 172 (KQLKCIVGLTKGPGELHFLCKFSDDTARLLPAKEVNSRYPSQVIRYYESKLTIQDPKA).

In terms of assembly, interacts with histone H3 when di-, or tri-methylated at 'Lys-27' (H3K27me2/me3), or tri-methylated at 'Lys-9' (H3K9me3). Interacts with Tar DNA-binding protein homolog tdp-1; interaction may maintain localization of hpl-2 to gene bodies. Interacts with histone H1 his-24, probably via interaction with hpl-1. Interacts with chromobox protein homolog hpl-1. As to quaternary structure, may form homodimers. Interacts (via chromo (shadow subtype) domain) with zinc finger protein lin-13 (via PLVPV motif); the interaction is direct and influences localization of hpl-2 to nuclear foci.

It localises to the nucleus. The protein resides in the chromosome. In terms of biological role, seems to be involved in transcriptional silencing in heterochromatin-like complexes. Probably does not act as global transcriptional repressor, instead targeting a subset of genes. Involved in RNA processing mediated by Tar DNA-binding protein homolog tdp-1. Plays a role in linking epigenetic regulation with the innate immune response. Involved in the endoplasmic reticulum (ER) stress response via modulation of the unfolded protein response (UPR), acting mainly through the IRE1-XBP1 pathway and perhaps, to a lesser extent, through the autophagy pathway. May act in a common pathway with retinoblastoma-like protein homolog lin-35 and zinc finger protein lin-13 to influence the ER stress response in the intestine. Plays a role in the formation of the vulva and in fertility, acting together with a CoREST-like complex, and chromobox protein homolog hpl-1. Acting in concert with hpl-1 and histone H1 protein his-24, involved in reproduction, somatic gonad development, male tail development and vulval cell fate specification; perhaps as a result of modulating expression of Hox genes mab-5 and egl-5. In vulval cell fate specification may act by repressing transcription, of EGF family gene lin-3 in hypodermal hyp7, and of homeobox lin-39 in vulval precursor cells (VPC). Role in growth and somatic gonad development is antagonized by histone-lysine N-methyltransferase set-2/SET1. Required for larval development, acting redundantly with hpl-1. Plays a role in regulation of the developmentally arrested larval state known as dauer, longevity, and lipid metabolism. The chain is Chromobox protein homolog hpl-2 from Caenorhabditis elegans.